The following is a 238-amino-acid chain: Sugar fermentation stimulation protein homolog (238 aa).

It belongs to the SfsA family.

This chain is Sugar fermentation stimulation protein homolog, found in Histophilus somni (strain 2336) (Haemophilus somnus).